Consider the following 449-residue polypeptide: Ribosomal protein uS12 methylthiotransferase RimO (449 aa).

An MTTase N-terminal domain is found at 5–116 (PTIAISHLGC…IVDVVQRVEN (112 aa)). Residues Cys-14, Cys-50, Cys-79, Cys-154, Cys-158, and Cys-161 each contribute to the [4Fe-4S] cluster site. The Radical SAM core domain occupies 140–369 (TTTEGVAYLR…MEVQQPISIK (230 aa)). Residues 372 to 438 (QNCIGQTVPV…VYDLYGKTNL (67 aa)) form the TRAM domain.

It belongs to the methylthiotransferase family. RimO subfamily. It depends on [4Fe-4S] cluster as a cofactor.

Its subcellular location is the cytoplasm. It carries out the reaction L-aspartate(89)-[ribosomal protein uS12]-hydrogen + (sulfur carrier)-SH + AH2 + 2 S-adenosyl-L-methionine = 3-methylsulfanyl-L-aspartate(89)-[ribosomal protein uS12]-hydrogen + (sulfur carrier)-H + 5'-deoxyadenosine + L-methionine + A + S-adenosyl-L-homocysteine + 2 H(+). Catalyzes the methylthiolation of an aspartic acid residue of ribosomal protein uS12. In Rippkaea orientalis (strain PCC 8801 / RF-1) (Cyanothece sp. (strain PCC 8801)), this protein is Ribosomal protein uS12 methylthiotransferase RimO.